A 640-amino-acid chain; its full sequence is Serine/threonine-protein kinase ELM1 (640 aa).

Positions Glu-27–Ser-47 are disordered. The segment covering Pro-35 to Ser-47 has biased composition (low complexity). In terms of domain architecture, Protein kinase spans Tyr-88–Ile-420. ATP is bound by residues Ala-94–Val-102 and Lys-117. Residue Ser-152 is modified to Phosphoserine. The Proton acceptor role is filled by Asp-259. Phosphoserine occurs at positions 516 and 519. A compositionally biased stretch (polar residues) spans Leu-520 to Lys-529. Disordered stretches follow at residues Leu-520–Leu-547 and Ser-562–Thr-587. A compositionally biased stretch (basic and acidic residues) spans Gln-530–Ser-541. The segment covering Arg-569–Pro-579 has biased composition (polar residues).

Belongs to the protein kinase superfamily. Ser/Thr protein kinase family. The cofactor is Mg(2+).

It carries out the reaction L-seryl-[protein] + ATP = O-phospho-L-seryl-[protein] + ADP + H(+). It catalyses the reaction L-threonyl-[protein] + ATP = O-phospho-L-threonyl-[protein] + ADP + H(+). Important role in G1 events required for bud emergence and septin organization. Coordinates cell growth and cell division at G2/M, essential for efficient cytokinesis and for regulation of SWE1. This Saccharomyces cerevisiae (strain ATCC 204508 / S288c) (Baker's yeast) protein is Serine/threonine-protein kinase ELM1 (ELM1).